The primary structure comprises 985 residues: Na(+)/H(+) antiporter (985 aa).

Topologically, residues 1 to 12 (MAIWEQLEVSKA) are cytoplasmic. A helical transmembrane segment spans residues 13 to 33 (HVAYACVGVFSSIFSLVSLYV). The Extracellular portion of the chain corresponds to 34 to 36 (KEK). A helical membrane pass occupies residues 37–57 (LYIGESTVAGIFGLIVGPVCL). Residues 58-70 (NWFNPLKWGNSDS) lie on the Cytoplasmic side of the membrane. A helical transmembrane segment spans residues 71–91 (ITLEITRIVLCLQIFAVAVEL). Residues 92–105 (PRKYMLKHWVSVTM) are Extracellular-facing. The helical transmembrane segment at 106-126 (LLLPVMTAGWLIIGLFVWILI) threads the bilayer. Residues 127 to 128 (PG) are Cytoplasmic-facing. A helical transmembrane segment spans residues 129 to 149 (LNFSASLLISACITATDPILA). Over 150 to 176 (QSVVSGKFAQRVPGHLRNLLSAESGCN) the chain is Extracellular. A helical membrane pass occupies residues 177 to 197 (DGMAFPFLFLSMNLILHPGNG). Residues 198 to 203 (REIVKD) lie on the Cytoplasmic side of the membrane. Residues 204–224 (WICVTILYECLFGCLLGCFIG) form a helical membrane-spanning segment. Over 225 to 244 (YVGRITIRFAEKKNIIDRES) the chain is Extracellular. The helical transmembrane segment at 245 to 265 (FLAFYVVLAFMCAGFGSILGV) threads the bilayer. At 266–294 (DDLLVSFAAGATFAWDGWFSQKTQESNVS) the chain is on the cytoplasmic side. The chain crosses the membrane as a helical span at residues 295-315 (TVIDLLLNYAYFIYFGAIIPW). The Extracellular segment spans residues 316 to 319 (SQFN). Residues 320-340 (NGEIGTNVWRLIILSIVVIFL) traverse the membrane as a helical segment. Residues 341–361 (RRIPAVMILRPLIPDIKSWRE) lie on the Cytoplasmic side of the membrane. The chain crosses the membrane as a helical span at residues 362-382 (ALFVGHFGPIGVGAIFAAILA). Residues 383-410 (RGELESTFSDEPTPLNVVPSKEESKHWQ) are Extracellular-facing. Residues 411–431 (LIACIWPITCFFIVTSIIVHG) form a helical membrane-spanning segment. The Cytoplasmic portion of the chain corresponds to 432–985 (SSVAIITLGR…ALSKTLGLNK (554 aa)). Disordered regions lie at residues 489–701 (MTLS…KPGT) and 726–760 (DRNE…GGRL). Polar residues predominate over residues 517–526 (NNDQIGSVAT). Basic residues predominate over residues 538-558 (PRRRKLSRKEKRLNRRQKLRN). Basic and acidic residues-rich tracts occupy residues 559-572 (KGRE…KNEM) and 580-593 (DLGR…KEAR). Residue Ser568 is modified to Phosphoserine. Positions 637-646 (SFESSERSSS) are enriched in low complexity. A compositionally biased stretch (acidic residues) spans 661–675 (EETESEIESEDEMEN). The segment covering 676 to 698 (ESERSMASSEERRIRKMKEEEMK) has biased composition (basic and acidic residues). Residues 743–756 (SSLTTTMTNLSSSS) are compositionally biased toward low complexity. At Thr765 the chain carries Phosphothreonine. Phosphoserine occurs at positions 768 and 774. The disordered stretch occupies residues 812-985 (INPHKSDDDK…ALSKTLGLNK (174 aa)). Composition is skewed to basic and acidic residues over residues 815–828 (HKSD…RPRN) and 854–863 (DEEKAIEGPS). Over residues 887 to 920 (LDLEDEPSSEEDLGDSYNMDDSEDYDDNAYESET) the composition is skewed to acidic residues. A compositionally biased stretch (low complexity) spans 970 to 979 (SAAVKSALSK).

This sequence belongs to the fungal Na(+)/H(+) exchanger family.

The protein resides in the cell membrane. Its function is as follows. Sodium export from cell, takes up external protons in exchange for internal sodium ions. Also capable of exporting potassium ions. This Saccharomyces cerevisiae (strain ATCC 204508 / S288c) (Baker's yeast) protein is Na(+)/H(+) antiporter (NHA1).